We begin with the raw amino-acid sequence, 85 residues long: MQNQKHSHILTAITIVLLFAMAAKINAIDVHDAMCYRSECTSVCDQICLSHGYTNGWYCGTFRLHTGCCCLKKKELNQIISPSKN.

Positions 1-27 (MQNQKHSHILTAITIVLLFAMAAKINA) are cleaved as a signal peptide. 4 cysteine pairs are disulfide-bonded: Cys35-Cys70, Cys40-Cys59, Cys44-Cys68, and Cys48-Cys69.

It belongs to the DEFL family.

It is found in the secreted. The polypeptide is Defensin-like protein 76 (LCR86) (Arabidopsis thaliana (Mouse-ear cress)).